The primary structure comprises 104 residues: Colipase-like protein 2 (104 aa).

Residues 1–19 (MAFTQALVTVLAFLVGTLP) form the signal peptide. 5 disulfides stabilise this stretch: Cys-38–Cys-49, Cys-44–Cys-60, Cys-48–Cys-82, Cys-70–Cys-90, and Cys-84–Cys-101.

This sequence belongs to the colipase family.

Its subcellular location is the secreted. The chain is Colipase-like protein 2 (Clpsl2) from Rattus norvegicus (Rat).